The following is a 406-amino-acid chain: Peptidase T (406 aa).

Position 78 (H78) interacts with Zn(2+). D80 is an active-site residue. D139 is a binding site for Zn(2+). The active-site Proton acceptor is the E173. Positions 174, 196, and 378 each coordinate Zn(2+).

Belongs to the peptidase M20B family. It depends on Zn(2+) as a cofactor.

It is found in the cytoplasm. It catalyses the reaction Release of the N-terminal residue from a tripeptide.. In terms of biological role, cleaves the N-terminal amino acid of tripeptides. The chain is Peptidase T from Clostridium perfringens (strain SM101 / Type A).